Here is a 149-residue protein sequence, read N- to C-terminus: Nucleoside diphosphate kinase (149 aa).

6 residues coordinate ATP: Lys9, Phe57, Arg85, Thr91, Arg102, and Asn112. His115 (pros-phosphohistidine intermediate) is an active-site residue.

This sequence belongs to the NDK family. As to quaternary structure, homotetramer. Requires Mg(2+) as cofactor.

Its subcellular location is the cytoplasm. It carries out the reaction a 2'-deoxyribonucleoside 5'-diphosphate + ATP = a 2'-deoxyribonucleoside 5'-triphosphate + ADP. It catalyses the reaction a ribonucleoside 5'-diphosphate + ATP = a ribonucleoside 5'-triphosphate + ADP. Functionally, major role in the synthesis of nucleoside triphosphates other than ATP. The ATP gamma phosphate is transferred to the NDP beta phosphate via a ping-pong mechanism, using a phosphorylated active-site intermediate. This is Nucleoside diphosphate kinase from Cyanothece sp. (strain PCC 7425 / ATCC 29141).